The sequence spans 239 residues: tRNA (guanine-N(7)-)-methyltransferase (239 aa).

Residues E69, E94, D121, and D144 each contribute to the S-adenosyl-L-methionine site. The active site involves D144. K148 lines the substrate pocket. Positions 150–155 (RHNKRR) are interaction with RNA. Substrate-binding positions include D180 and 217–220 (TKFE).

The protein belongs to the class I-like SAM-binding methyltransferase superfamily. TrmB family. As to quaternary structure, monomer.

It carries out the reaction guanosine(46) in tRNA + S-adenosyl-L-methionine = N(7)-methylguanosine(46) in tRNA + S-adenosyl-L-homocysteine. It participates in tRNA modification; N(7)-methylguanine-tRNA biosynthesis. Its function is as follows. Catalyzes the formation of N(7)-methylguanine at position 46 (m7G46) in tRNA. This is tRNA (guanine-N(7)-)-methyltransferase from Pectobacterium atrosepticum (strain SCRI 1043 / ATCC BAA-672) (Erwinia carotovora subsp. atroseptica).